A 229-amino-acid chain; its full sequence is UPF0758 protein Mbur_0382 (229 aa).

Positions 106-228 (KIRSANDVYS…YVSLKEEGYI (123 aa)) constitute an MPN domain. The Zn(2+) site is built by histidine 177, histidine 179, and aspartate 190. The JAMM motif signature appears at 177–190 (HNHPSGDPAPSRED).

This sequence belongs to the UPF0758 family.

This chain is UPF0758 protein Mbur_0382, found in Methanococcoides burtonii (strain DSM 6242 / NBRC 107633 / OCM 468 / ACE-M).